Here is a 392-residue protein sequence, read N- to C-terminus: Formate-dependent phosphoribosylglycinamide formyltransferase (392 aa).

Residues 22–23 (EL) and Glu-82 each bind N(1)-(5-phospho-beta-D-ribosyl)glycinamide. Residues Arg-114, Lys-155, 160–165 (SSGKGQ), 195–198 (EGVV), and Glu-203 each bind ATP. The ATP-grasp domain occupies 119–308 (RLAAEELGLP…EFALHVRAFL (190 aa)). Residues Glu-267 and Glu-279 each contribute to the Mg(2+) site. N(1)-(5-phospho-beta-D-ribosyl)glycinamide is bound by residues Asp-286, Lys-355, and 362-363 (RR).

The protein belongs to the PurK/PurT family. Homodimer.

The enzyme catalyses N(1)-(5-phospho-beta-D-ribosyl)glycinamide + formate + ATP = N(2)-formyl-N(1)-(5-phospho-beta-D-ribosyl)glycinamide + ADP + phosphate + H(+). Its pathway is purine metabolism; IMP biosynthesis via de novo pathway; N(2)-formyl-N(1)-(5-phospho-D-ribosyl)glycinamide from N(1)-(5-phospho-D-ribosyl)glycinamide (formate route): step 1/1. Involved in the de novo purine biosynthesis. Catalyzes the transfer of formate to 5-phospho-ribosyl-glycinamide (GAR), producing 5-phospho-ribosyl-N-formylglycinamide (FGAR). Formate is provided by PurU via hydrolysis of 10-formyl-tetrahydrofolate. This Cronobacter sakazakii (strain ATCC BAA-894) (Enterobacter sakazakii) protein is Formate-dependent phosphoribosylglycinamide formyltransferase.